The following is a 670-amino-acid chain: Aurofusarin cluster transcription factor aurR2 (670 aa).

Positions C12 to C38 form a DNA-binding region, zn(2)-C6 fungal-type. Disordered regions lie at residues R57–G76 and G92–T115. The segment covering G92–T113 has biased composition (basic and acidic residues).

It localises to the nucleus. Transcription factor that may participate in the regulation of the expression of the gene cluster that mediates the biosynthesis of aurofusarin, a red mycelium pigment which is acting as a mycotoxin. This Gibberella zeae (strain ATCC MYA-4620 / CBS 123657 / FGSC 9075 / NRRL 31084 / PH-1) (Wheat head blight fungus) protein is Aurofusarin cluster transcription factor aurR2.